We begin with the raw amino-acid sequence, 845 residues long: SLIT and NTRK-like protein 2 (845 aa).

The signal sequence occupies residues 1 to 21 (MLSGVWFLSVLTVAGILQTES). Over 22–621 (RKTAKDICKI…LHTEVPLSVL (600 aa)) the chain is Extracellular. 2 disulfide bridges follow: cysteine 29-cysteine 35 and cysteine 33-cysteine 46. LRR repeat units lie at residues 63-84 (RIYQ…EFVN), 87-108 (NAVT…AFSG), 111-132 (TLKR…TFLG), 135-156 (SLEY…AFSK), 159-180 (KLKV…VFRF), and 182-203 (LLTH…GVLE). Residue asparagine 84 is glycosylated (N-linked (GlcNAc...) asparagine). The segment at 167 to 215 (DNLLLSLPSNVFRFVLLTHLDLRGNRLKVMPFAGVLEHIGGIMEIQLEE) is required for interaction with PTPRD. An LRRCT 1 domain is found at 216–265 (NPWNCTCDLLPLKAWLDTITVFVGEIVCETPFRLHGKDVTQLTRQDLCPR). Intrachain disulfides connect cysteine 220–cysteine 243 and cysteine 222–cysteine 263. The interval 263–321 (CPRKSASDSSQRGSHADTHVQRLSPTMNPALNPTRAPKASRPPKMRNRPTPRVTVSKDR) is disordered. A compositionally biased stretch (polar residues) spans 283–293 (QRLSPTMNPAL). The LRRNT domain occupies 331-373 (QTKSPVPLTCPSSCVCTSQSSDNGLNVNCQERKFTNISDLQPK). 6 LRR repeats span residues 376-397 (SPKK…DLLE), 400-421 (SLDL…AFTN), 424-445 (SLRR…MFDG), 448-469 (SLQY…TFDA), 472-493 (NLQL…IFGG), and 495-516 (ALTR…GVLD). N-linked (GlcNAc...) asparagine glycosylation is present at asparagine 421. An LRRCT 2 domain is found at 529–580 (NPWDCTCDIMGLKDWTEHANSPVIINEVTCESPAKHAGEILKFLGREAICPD). Residues 622–642 (ILGLLVVFILSVCFGAGLFVF) traverse the membrane as a helical segment. Over 643–845 (VLKRRKGVPS…LEKQTAISQL (203 aa)) the chain is Cytoplasmic. The residue at position 756 (tyrosine 756) is a Phosphotyrosine.

This sequence belongs to the SLITRK family. Interacts with PTPRD; this interaction is PTPRD splicing-dependent and may induce pre-synaptic differentiation. Interacts with NTRK2. As to expression, expressed predominantly in the cerebral cortex of the brain but also at low levels in the spinal cord and medulla. Also expressed in some astrocytic brain tumors such as astrocytomas, oligodendrogliomas, glioblastomas, gangliogliomas and primitive neuroectodermal tumors.

Its subcellular location is the membrane. It localises to the cell membrane. The protein resides in the cell projection. The protein localises to the dendrite. It is involved in synaptogenesis and promotes excitatory synapse differentiation. Suppresses neurite outgrowth. Involved in the negative regulation of NTRK2. In Homo sapiens (Human), this protein is SLIT and NTRK-like protein 2 (SLITRK2).